Reading from the N-terminus, the 125-residue chain is UPF0231 protein in hemN 3'region (125 aa).

This sequence belongs to the UPF0231 family.

This is UPF0231 protein in hemN 3'region from Mannheimia haemolytica (Pasteurella haemolytica).